The sequence spans 430 residues: Probable ribosomal RNA small subunit methyltransferase B (430 aa).

Residues Cys-246–Lys-252, Asp-270, Asp-299, and Asp-318 each bind S-adenosyl-L-methionine. The active-site Nucleophile is the Cys-371.

Belongs to the class I-like SAM-binding methyltransferase superfamily. RsmB/NOP family.

The protein localises to the cytoplasm. The enzyme catalyses cytidine(967) in 16S rRNA + S-adenosyl-L-methionine = 5-methylcytidine(967) in 16S rRNA + S-adenosyl-L-homocysteine + H(+). Its function is as follows. Specifically methylates the cytosine at position 967 (m5C967) of 16S rRNA. The protein is Probable ribosomal RNA small subunit methyltransferase B of Coxiella burnetii (strain RSA 493 / Nine Mile phase I).